A 768-amino-acid polypeptide reads, in one-letter code: Protein transport protein Sec23A (768 aa).

Threonine 2 is modified (N-acetylthreonine). Zn(2+) is bound by residues cysteine 61, cysteine 66, cysteine 85, and cysteine 88. Phosphothreonine is present on threonine 308. The stretch at 632–718 (PEPVLLDSSS…EHGGSQARFL (87 aa)) is one Gelsolin-like repeat.

The protein belongs to the SEC23/SEC24 family. SEC23 subfamily. In terms of assembly, COPII is composed of at least five proteins: the Sec23/24 complex, the Sec13/31 complex and Sar1. Interacts with SEC23IP. Interacts with HTR4. Interacts with SEC16A. Interacts with SLC6A4. Interacts (as part of the Sec23/24 complex) with SEC22B; recruits SEC22B into COPII-coated vesicles and allows the transport of this cargo from the endoplasmic reticulum to the Golgi. Interacts (via Gelsolin-like repeat) with MIA2 and MIA3; specifically involved in the transport of large cargos like the collagen COL7A1. Interacts with DDHD1. Interacts with TMEM39A. Interacts with SACM1L; this interaction is reduced in the absence of TMEM39A. Interacts with kinase FAM20C; transport of FAM20C from the endoplasmic reticulum to the Golgi is likely to be mediated by COPII vesicles.

It is found in the cytoplasmic vesicle. The protein resides in the COPII-coated vesicle membrane. The protein localises to the endoplasmic reticulum membrane. Its subcellular location is the cytoplasm. It localises to the cytosol. Functionally, component of the coat protein complex II (COPII) which promotes the formation of transport vesicles from the endoplasmic reticulum (ER). The coat has two main functions, the physical deformation of the endoplasmic reticulum membrane into vesicles and the selection of cargo molecules for their transport to the Golgi complex. Required for the translocation of insulin-induced glucose transporter SLC2A4/GLUT4 to the cell membrane. The chain is Protein transport protein Sec23A from Bos taurus (Bovine).